The following is a 287-amino-acid chain: Nucleotide-binding protein mma_3120 (287 aa).

8 to 15 (GISGSGKS) is a binding site for ATP. 57-60 (DARS) contacts GTP.

This sequence belongs to the RapZ-like family.

Functionally, displays ATPase and GTPase activities. The protein is Nucleotide-binding protein mma_3120 of Janthinobacterium sp. (strain Marseille) (Minibacterium massiliensis).